We begin with the raw amino-acid sequence, 419 residues long: Akuammiline synthase 1 (419 aa).

The active-site Proton acceptor is histidine 151. The Nuclear localization signal signature appears at 206-213 (TRRFVFPA). Aspartate 359 functions as the Proton acceptor in the catalytic mechanism.

This sequence belongs to the plant acyltransferase family. Monomer.

The protein resides in the cytoplasm. It localises to the nucleus. The enzyme catalyses rhazimol + acetyl-CoA = akuammiline + CoA + H(+). It functions in the pathway alkaloid biosynthesis. In terms of biological role, acyltransferase involved in the biosynthesis of akuammilan monoterpene indole alkaloids (MIAs) natural products, components with various biological properties such as antidiabetic, antibacterial, anti-inflammatory, anticancer, and antimalarial activities. Catalyzes the conversion of rhazimol to akuammiline. In Alstonia scholaris (Dogbane), this protein is Akuammiline synthase 1.